The primary structure comprises 292 residues: Nitrogenase iron protein 1 (292 aa).

ATP is bound at residue glycine 12–serine 19. A [4Fe-4S] cluster-binding site is contributed by cysteine 101. Arginine 104 carries the ADP-ribosylarginine; by dinitrogenase reductase ADP-ribosyltransferase modification. Residue cysteine 135 participates in [4Fe-4S] cluster binding.

Belongs to the NifH/BchL/ChlL family. In terms of assembly, homodimer. It depends on [4Fe-4S] cluster as a cofactor. The reversible ADP-ribosylation of Arg-104 inactivates the nitrogenase reductase and regulates nitrogenase activity.

It carries out the reaction N2 + 8 reduced [2Fe-2S]-[ferredoxin] + 16 ATP + 16 H2O = H2 + 8 oxidized [2Fe-2S]-[ferredoxin] + 2 NH4(+) + 16 ADP + 16 phosphate + 6 H(+). Functionally, the key enzymatic reactions in nitrogen fixation are catalyzed by the nitrogenase complex, which has 2 components: the iron protein and the molybdenum-iron protein. The sequence is that of Nitrogenase iron protein 1 (nifH1) from Paenibacillus durus (Paenibacillus azotofixans).